The sequence spans 86 residues: Co-chaperonin GroES (86 aa).

This sequence belongs to the GroES chaperonin family. Heptamer of 7 subunits arranged in a ring. Interacts with the chaperonin GroEL.

The protein localises to the cytoplasm. Its function is as follows. Together with the chaperonin GroEL, plays an essential role in assisting protein folding. The GroEL-GroES system forms a nano-cage that allows encapsulation of the non-native substrate proteins and provides a physical environment optimized to promote and accelerate protein folding. GroES binds to the apical surface of the GroEL ring, thereby capping the opening of the GroEL channel. The protein is Co-chaperonin GroES of Campylobacter curvus (strain 525.92).